A 228-amino-acid chain; its full sequence is Phosphoenolpyruvate guanylyltransferase (228 aa).

Residues threonine 148, glycine 164, and serine 167 each coordinate phosphoenolpyruvate.

It belongs to the CofC family.

The enzyme catalyses phosphoenolpyruvate + GTP + H(+) = enolpyruvoyl-2-diphospho-5'-guanosine + diphosphate. The protein operates within cofactor biosynthesis; coenzyme F420 biosynthesis. Its function is as follows. Guanylyltransferase that catalyzes the activation of phosphoenolpyruvate (PEP) as enolpyruvoyl-2-diphospho-5'-guanosine, via the condensation of PEP with GTP. It is involved in the biosynthesis of coenzyme F420, a hydride carrier cofactor. The protein is Phosphoenolpyruvate guanylyltransferase of Thermomonospora curvata (strain ATCC 19995 / DSM 43183 / JCM 3096 / KCTC 9072 / NBRC 15933 / NCIMB 10081 / Henssen B9).